A 403-amino-acid chain; its full sequence is Argininosuccinate synthase (403 aa).

ATP contacts are provided by residues 10-18 (AYSGGVDTS) and Ala38. Position 89 (Tyr89) interacts with L-citrulline. Gly119 contributes to the ATP binding site. 3 residues coordinate L-aspartate: Thr121, Asn125, and Asp126. Asn125 serves as a coordination point for L-citrulline. L-citrulline-binding residues include Arg129, Ser177, Ser186, Glu262, and Tyr274.

It belongs to the argininosuccinate synthase family. Type 1 subfamily. Homotetramer.

The protein localises to the cytoplasm. It catalyses the reaction L-citrulline + L-aspartate + ATP = 2-(N(omega)-L-arginino)succinate + AMP + diphosphate + H(+). It functions in the pathway amino-acid biosynthesis; L-arginine biosynthesis; L-arginine from L-ornithine and carbamoyl phosphate: step 2/3. This chain is Argininosuccinate synthase, found in Synechococcus sp. (strain CC9902).